The chain runs to 516 residues: Sodium channel protein Nach (516 aa).

The Cytoplasmic portion of the chain corresponds to 1 to 49 (MGHEEELSPEQVDLKVSPLMGSLKRTWNDFCATSSIHGLRYTRDEDTNR). A helical transmembrane segment spans residues 50–70 (IVHFVWLLISLVMFICAVVMA). Over 71–452 (RTFYIDFRSN…LVSNLGSAFS (382 aa)) the chain is Extracellular. N-linked (GlcNAc...) asparagine glycans are attached at residues Asn128, Asn165, Asn220, and Asn348. The helical transmembrane segment at 453–473 (LFVGMSMLSVVEIMYYFSVIL) threads the bilayer. Residues 474–516 (RKNYVLECEARKKMLHKGPKFAWPKANDSHSKHQKSVFIIHKM) are Cytoplasmic-facing.

This sequence belongs to the amiloride-sensitive sodium channel (TC 1.A.6) family.

The protein resides in the membrane. Its function is as follows. Part of a complex that plays a role in tracheal liquid clearance. Probable role in sodium transport. In Drosophila ananassae (Fruit fly), this protein is Sodium channel protein Nach (Nach).